An 875-amino-acid polypeptide reads, in one-letter code: MELASKYNPADVEGKWYQYWLDNKLFSSKPDGREPYTVVIPPPNVTGVLHMGHMLNNTIQDILVRRARMEGKNACWVPGTDHASIATEAKVVNKLAGQGIKKTDLSRDEFLKHAWAWTEEHGGIILKQLRKLGASCDWDRTAFTMDEERSESVIKVFVDLYNKGLIYRGVRMVNWDPKALTALSDEEVIYKEEHSKLYYLRYKVEGDAEGRYAVVATTRPETIMGDTAMCINPNDPKNQWLKGKKVIVPLVNRIIPVIEDDYVDIEFGTGCLKVTPAHDVNDYMLGEKYNLPSIDIFNDNGTLSEAAGLYVGMDRFDVRKQIEQDLQAAGLLEKVEAYTNKVGFSERTNVAIEPKLSMQWFLKMQHFADMALPPVMNDELKFYPAKYKNTYKNWLENIKDWCISRQLWWGHRIPAYFLPEGGYVVAETAEEALKLAQEKTGNTNLKMEDLRQDDDCLDTWFSSWLWPISLFNGINNPNNEEINYYYPTSDLVTGPDIIFFWVARMIMAGYEYKGDMPFKNVYFTGIVRDKLGRKMSKSLGNSPDPLELIDKYGADGVRMGMMLAAPAGNDILFDDALCEQGRNFNNKIWNAFRLVKGWEVADIAQPEYARLATEWFESMLAKTAAEVADLFGKYRLSEALMAVYKLFWDEFSSWYLEMIKPAYGQPIDKATYEKTLGFFDNLLKLLHPFMPFITEELWQHIYDRKEGESLMVQQLNIPTACNEIIVKEFEVVKEVIGGIRTIRLQKNIAQKETLELQVVGVNPVATFNPVITKLCNLSSIEAVENKADGSGSFMVGTTEYAIPLGNLINTEEELAKLEADLKYQEGFLQSVLKKLSNEKFVSKAPANVIDMERKKQADAESKIASLKESIAALKK.

Positions 43 to 53 (PNVTGVLHMGH) match the 'HIGH' region motif. Positions 534–538 (KMSKS) match the 'KMSKS' region motif. K537 serves as a coordination point for ATP. Residues 805–875 (GNLINTEEEL…LKESIAALKK (71 aa)) are a coiled coil.

Belongs to the class-I aminoacyl-tRNA synthetase family. ValS type 1 subfamily. In terms of assembly, monomer.

Its subcellular location is the cytoplasm. The catalysed reaction is tRNA(Val) + L-valine + ATP = L-valyl-tRNA(Val) + AMP + diphosphate. Its function is as follows. Catalyzes the attachment of valine to tRNA(Val). As ValRS can inadvertently accommodate and process structurally similar amino acids such as threonine, to avoid such errors, it has a 'posttransfer' editing activity that hydrolyzes mischarged Thr-tRNA(Val) in a tRNA-dependent manner. The sequence is that of Valine--tRNA ligase from Phocaeicola vulgatus (strain ATCC 8482 / DSM 1447 / JCM 5826 / CCUG 4940 / NBRC 14291 / NCTC 11154) (Bacteroides vulgatus).